The chain runs to 1593 residues: ABC transporter C family member 8 (1593 aa).

Transmembrane regions (helical) follow at residues 27-47 (VVMTLPAIYLLIFGMKRLYYL), 75-95 (VIVSILLVAWKILFFIVIVSI), 100-120 (FEILYSVVTVVQWTVSLGLVY), 135-155 (LYWVFAFFVATVKLRTLTLAI), 169-189 (FSYFVGYCLILILSITSVLFF), 280-300 (FYIAALFKIIQDLLIFVGPTL), 318-338 (YDGLIYALLYFLAPVVQSLLL), 392-412 (LCPYLHMIWSAPLQLAISLVL), 419-439 (ASVFAGLGIMLVMIPINLAIS), and 505-525 (LLLWSMSPVFVSVSTFTVYIL). Residues 280–561 (FYIAALFKII…LPSVVSSIIE (282 aa)) enclose the ABC transmembrane type-1 1 domain. The region spanning 594–818 (VKIDNATLEW…GSHFTELMSH (225 aa)) is the ABC transporter 1 domain. An ATP-binding site is contributed by 627–634 (GQVGSGKS). Residues 816-938 (MSHDEQQQQL…PLQKGEKSSV (123 aa)) form a disordered region. The stretch at 844 to 875 (GDNKESENNEEQNEEEEGENENLLEKVLRKSR) forms a coiled coil. Residues 851–865 (NNEEQNEEEEGENEN) are compositionally biased toward acidic residues. Residues 877-886 (RSPSPSSNRN) show a composition bias toward low complexity. Positions 905 to 922 (EEDEQDERELMEDIDIDG) are enriched in acidic residues. Transmembrane regions (helical) follow at residues 1005–1025 (IGVLLATCIIGFYVLTQLLSI), 1064–1084 (AKYYLSIYVAFSCGTIAATFL), 1157–1177 (IIVIAWVSPFIILAMVPVGAL), 1251–1271 (LAIRLEFLGACLVSCAVLYTV), and 1280–1300 (GTAGLVITYALAITGNMNWMV). In terms of domain architecture, ABC transmembrane type-1 2 spans 1010-1308 (ATCIIGFYVL…MVRMSCDLEN (299 aa)). In terms of domain architecture, ABC transporter 2 spans 1344–1578 (IVFKNLWLTY…QDSIYYSLVK (235 aa)). 1378 to 1385 (GRTGAGKS) contacts ATP.

Belongs to the ABC transporter superfamily. ABCC family. Conjugate transporter (TC 3.A.1.208) subfamily.

The protein resides in the membrane. This is ABC transporter C family member 8 (abcC8) from Dictyostelium discoideum (Social amoeba).